The primary structure comprises 234 residues: FAS1 domain-containing protein AFUA_8G05360 (234 aa).

A signal peptide spans 1-21 (MRRTLFVLFVVAFCFIGSVIA). Positions 83-231 (KPVVSDVLPK…GELWILNSVL (149 aa)) constitute an FAS1 domain.

Its subcellular location is the vacuole. The sequence is that of FAS1 domain-containing protein AFUA_8G05360 from Aspergillus fumigatus (strain ATCC MYA-4609 / CBS 101355 / FGSC A1100 / Af293) (Neosartorya fumigata).